A 328-amino-acid chain; its full sequence is D-cysteine desulfhydrase (328 aa).

N6-(pyridoxal phosphate)lysine is present on Lys51.

Belongs to the ACC deaminase/D-cysteine desulfhydrase family. Homodimer. The cofactor is pyridoxal 5'-phosphate.

The enzyme catalyses D-cysteine + H2O = hydrogen sulfide + pyruvate + NH4(+) + H(+). In terms of biological role, catalyzes the alpha,beta-elimination reaction of D-cysteine and of several D-cysteine derivatives. It could be a defense mechanism against D-cysteine. This Salmonella paratyphi B (strain ATCC BAA-1250 / SPB7) protein is D-cysteine desulfhydrase.